Consider the following 593-residue polypeptide: NADH-quinone oxidoreductase subunit C/D (593 aa).

Residues 1 to 184 (MTADNALYIP…DPYSLTLAKQ (184 aa)) form an NADH dehydrogenase I subunit C region. Positions 208–593 (DYMFLNLGPN…IDFVMADVDR (386 aa)) are NADH dehydrogenase I subunit D.

In the N-terminal section; belongs to the complex I 30 kDa subunit family. The protein in the C-terminal section; belongs to the complex I 49 kDa subunit family. In terms of assembly, NDH-1 is composed of 13 different subunits. Subunits NuoB, CD, E, F, and G constitute the peripheral sector of the complex.

It localises to the cell inner membrane. It catalyses the reaction a quinone + NADH + 5 H(+)(in) = a quinol + NAD(+) + 4 H(+)(out). NDH-1 shuttles electrons from NADH, via FMN and iron-sulfur (Fe-S) centers, to quinones in the respiratory chain. The immediate electron acceptor for the enzyme in this species is believed to be ubiquinone. Couples the redox reaction to proton translocation (for every two electrons transferred, four hydrogen ions are translocated across the cytoplasmic membrane), and thus conserves the redox energy in a proton gradient. In Pseudomonas savastanoi pv. phaseolicola (strain 1448A / Race 6) (Pseudomonas syringae pv. phaseolicola (strain 1448A / Race 6)), this protein is NADH-quinone oxidoreductase subunit C/D.